Consider the following 391-residue polypeptide: 1-deoxy-D-xylulose 5-phosphate reductoisomerase (391 aa).

The NADPH site is built by Thr17, Gly18, Ser19, Ile20, Asn47, and Asn130. Residue Lys131 coordinates 1-deoxy-D-xylulose 5-phosphate. Glu132 is an NADPH binding site. Residue Asp156 coordinates Mn(2+). 4 residues coordinate 1-deoxy-D-xylulose 5-phosphate: Ser157, Glu158, Ser182, and His205. Glu158 is a Mn(2+) binding site. An NADPH-binding site is contributed by Gly211. 1-deoxy-D-xylulose 5-phosphate-binding residues include Ser218, Asn223, Lys224, and Glu227. Residue Glu227 participates in Mn(2+) binding.

It belongs to the DXR family. The cofactor is Mg(2+). It depends on Mn(2+) as a cofactor.

It carries out the reaction 2-C-methyl-D-erythritol 4-phosphate + NADP(+) = 1-deoxy-D-xylulose 5-phosphate + NADPH + H(+). It functions in the pathway isoprenoid biosynthesis; isopentenyl diphosphate biosynthesis via DXP pathway; isopentenyl diphosphate from 1-deoxy-D-xylulose 5-phosphate: step 1/6. In terms of biological role, catalyzes the NADPH-dependent rearrangement and reduction of 1-deoxy-D-xylulose-5-phosphate (DXP) to 2-C-methyl-D-erythritol 4-phosphate (MEP). The protein is 1-deoxy-D-xylulose 5-phosphate reductoisomerase of Sinorhizobium medicae (strain WSM419) (Ensifer medicae).